A 146-amino-acid polypeptide reads, in one-letter code: Phosphoribosyl-AMP cyclohydrolase (146 aa).

D95 is a Mg(2+) binding site. A Zn(2+)-binding site is contributed by C96. Mg(2+) contacts are provided by D97 and D99. The Zn(2+) site is built by C112 and C119.

The protein belongs to the PRA-CH family. As to quaternary structure, homodimer. Mg(2+) is required as a cofactor. It depends on Zn(2+) as a cofactor.

It localises to the cytoplasm. It catalyses the reaction 1-(5-phospho-beta-D-ribosyl)-5'-AMP + H2O = 1-(5-phospho-beta-D-ribosyl)-5-[(5-phospho-beta-D-ribosylamino)methylideneamino]imidazole-4-carboxamide. It participates in amino-acid biosynthesis; L-histidine biosynthesis; L-histidine from 5-phospho-alpha-D-ribose 1-diphosphate: step 3/9. Catalyzes the hydrolysis of the adenine ring of phosphoribosyl-AMP. The polypeptide is Phosphoribosyl-AMP cyclohydrolase (Chromohalobacter salexigens (strain ATCC BAA-138 / DSM 3043 / CIP 106854 / NCIMB 13768 / 1H11)).